Consider the following 186-residue polypeptide: ATP synthase subunit delta (186 aa).

Belongs to the ATPase delta chain family. F-type ATPases have 2 components, F(1) - the catalytic core - and F(0) - the membrane proton channel. F(1) has five subunits: alpha(3), beta(3), gamma(1), delta(1), epsilon(1). CF(0) has four main subunits: a(1), b(1), b'(1) and c(10-14). The alpha and beta chains form an alternating ring which encloses part of the gamma chain. F(1) is attached to F(0) by a central stalk formed by the gamma and epsilon chains, while a peripheral stalk is formed by the delta, b and b' chains.

It is found in the cell inner membrane. Functionally, f(1)F(0) ATP synthase produces ATP from ADP in the presence of a proton or sodium gradient. F-type ATPases consist of two structural domains, F(1) containing the extramembraneous catalytic core and F(0) containing the membrane proton channel, linked together by a central stalk and a peripheral stalk. During catalysis, ATP synthesis in the catalytic domain of F(1) is coupled via a rotary mechanism of the central stalk subunits to proton translocation. Its function is as follows. This protein is part of the stalk that links CF(0) to CF(1). It either transmits conformational changes from CF(0) to CF(1) or is implicated in proton conduction. The polypeptide is ATP synthase subunit delta (Rhodopseudomonas palustris (strain HaA2)).